We begin with the raw amino-acid sequence, 504 residues long: Maturase K (504 aa).

This sequence belongs to the intron maturase 2 family. MatK subfamily.

Its subcellular location is the plastid. It localises to the chloroplast. In terms of biological role, usually encoded in the trnK tRNA gene intron. Probably assists in splicing its own and other chloroplast group II introns. The sequence is that of Maturase K from Adansonia digitata (Baobab tree).